We begin with the raw amino-acid sequence, 359 residues long: Nicotinate-nucleotide--dimethylbenzimidazole phosphoribosyltransferase (359 aa).

Residue Glu318 is the Proton acceptor of the active site.

This sequence belongs to the CobT family. Homodimer.

It carries out the reaction 5,6-dimethylbenzimidazole + nicotinate beta-D-ribonucleotide = alpha-ribazole 5'-phosphate + nicotinate + H(+). It participates in nucleoside biosynthesis; alpha-ribazole biosynthesis; alpha-ribazole from 5,6-dimethylbenzimidazole: step 1/2. In terms of biological role, catalyzes the synthesis of alpha-ribazole-5'-phosphate from nicotinate mononucleotide (NAMN) and 5,6-dimethylbenzimidazole (DMB). The chain is Nicotinate-nucleotide--dimethylbenzimidazole phosphoribosyltransferase from Escherichia coli O157:H7.